The following is a 77-amino-acid chain: Tachyplesin-1 (77 aa).

The N-terminal stretch at 1-23 (MKKLVIALCLMMVLAVMVEEAEA) is a signal peptide. 2 cysteine pairs are disulfide-bonded: Cys26–Cys39 and Cys30–Cys35. An Arginine amide modification is found at Arg40. Positions 41–77 (GKRNEVRQYRDRGYDVRAIPEETFFTRQDEDEDDDEE) are excised as a propeptide.

The protein belongs to the tachyplesin/polyphemusin family. As to expression, hemocytes.

It localises to the secreted. Significantly inhibits the growth of Gram-negative and Gram-positive bacteria. The polypeptide is Tachyplesin-1 (Tachypleus tridentatus (Japanese horseshoe crab)).